The following is a 294-amino-acid chain: Glycine--tRNA ligase alpha subunit (294 aa).

This sequence belongs to the class-II aminoacyl-tRNA synthetase family. In terms of assembly, tetramer of two alpha and two beta subunits.

It is found in the cytoplasm. The enzyme catalyses tRNA(Gly) + glycine + ATP = glycyl-tRNA(Gly) + AMP + diphosphate. The protein is Glycine--tRNA ligase alpha subunit of Oleidesulfovibrio alaskensis (strain ATCC BAA-1058 / DSM 17464 / G20) (Desulfovibrio alaskensis).